Consider the following 953-residue polypeptide: Valine--tRNA ligase (953 aa).

A 'HIGH' region motif is present at residues 42 to 52; the sequence is PNVTGSLHMGH. Residues 554–558 carry the 'KMSKS' region motif; the sequence is KMSKS. Residue K557 coordinates ATP. Residues 884 to 952 are a coiled coil; the sequence is LIDKDAELDR…LEQQKATIAA (69 aa).

Belongs to the class-I aminoacyl-tRNA synthetase family. ValS type 1 subfamily. Monomer.

The protein localises to the cytoplasm. It catalyses the reaction tRNA(Val) + L-valine + ATP = L-valyl-tRNA(Val) + AMP + diphosphate. Functionally, catalyzes the attachment of valine to tRNA(Val). As ValRS can inadvertently accommodate and process structurally similar amino acids such as threonine, to avoid such errors, it has a 'posttransfer' editing activity that hydrolyzes mischarged Thr-tRNA(Val) in a tRNA-dependent manner. The polypeptide is Valine--tRNA ligase (Vibrio cholerae serotype O1 (strain ATCC 39315 / El Tor Inaba N16961)).